A 78-amino-acid chain; its full sequence is Large ribosomal subunit protein bL28 (78 aa).

This sequence belongs to the bacterial ribosomal protein bL28 family.

The protein is Large ribosomal subunit protein bL28 of Thiobacillus denitrificans (strain ATCC 25259 / T1).